The primary structure comprises 243 residues: tRNA pseudouridine synthase A (243 aa).

Asp53 acts as the Nucleophile in catalysis. Residue Tyr111 coordinates substrate.

The protein belongs to the tRNA pseudouridine synthase TruA family. Homodimer.

The catalysed reaction is uridine(38/39/40) in tRNA = pseudouridine(38/39/40) in tRNA. Its function is as follows. Formation of pseudouridine at positions 38, 39 and 40 in the anticodon stem and loop of transfer RNAs. This chain is tRNA pseudouridine synthase A, found in Chlorobium chlorochromatii (strain CaD3).